A 436-amino-acid polypeptide reads, in one-letter code: Arginine biosynthesis bifunctional protein ArgJ, mitochondrial (436 aa).

Substrate-binding residues include threonine 172, lysine 198, threonine 209, glutamate 298, asparagine 431, and serine 436. Residue threonine 209 is the Nucleophile of the active site.

This sequence belongs to the ArgJ family. In terms of assembly, heterodimer of an alpha and a beta chain. In terms of processing, the alpha and beta chains are autoproteolytically processed from a single precursor protein within the mitochondrion.

The protein localises to the mitochondrion matrix. The catalysed reaction is N(2)-acetyl-L-ornithine + L-glutamate = N-acetyl-L-glutamate + L-ornithine. It carries out the reaction L-glutamate + acetyl-CoA = N-acetyl-L-glutamate + CoA + H(+). The protein operates within amino-acid biosynthesis; L-arginine biosynthesis; L-ornithine and N-acetyl-L-glutamate from L-glutamate and N(2)-acetyl-L-ornithine (cyclic): step 1/1. It participates in amino-acid biosynthesis; L-arginine biosynthesis; N(2)-acetyl-L-ornithine from L-glutamate: step 1/4. Its function is as follows. Catalyzes two activities which are involved in the cyclic version of arginine biosynthesis: the synthesis of acetylglutamate from glutamate and acetyl-CoA, and of ornithine by transacetylation between acetylornithine and glutamate. This is Arginine biosynthesis bifunctional protein ArgJ, mitochondrial from Meyerozyma guilliermondii (strain ATCC 6260 / CBS 566 / DSM 6381 / JCM 1539 / NBRC 10279 / NRRL Y-324) (Yeast).